Reading from the N-terminus, the 187-residue chain is Elongation factor P (187 aa).

It belongs to the elongation factor P family.

The protein resides in the cytoplasm. It participates in protein biosynthesis; polypeptide chain elongation. Functionally, involved in peptide bond synthesis. Stimulates efficient translation and peptide-bond synthesis on native or reconstituted 70S ribosomes in vitro. Probably functions indirectly by altering the affinity of the ribosome for aminoacyl-tRNA, thus increasing their reactivity as acceptors for peptidyl transferase. The protein is Elongation factor P of Prochlorococcus marinus (strain NATL1A).